The chain runs to 214 residues: GTP cyclohydrolase 1 (214 aa).

Residues cysteine 108, histidine 111, and cysteine 179 each coordinate Zn(2+).

This sequence belongs to the GTP cyclohydrolase I family. Toroid-shaped homodecamer, composed of two pentamers of five dimers.

It catalyses the reaction GTP + H2O = 7,8-dihydroneopterin 3'-triphosphate + formate + H(+). Its pathway is cofactor biosynthesis; 7,8-dihydroneopterin triphosphate biosynthesis; 7,8-dihydroneopterin triphosphate from GTP: step 1/1. This is GTP cyclohydrolase 1 from Shewanella loihica (strain ATCC BAA-1088 / PV-4).